Here is a 101-residue protein sequence, read N- to C-terminus: Small ribosomal subunit protein bS18c (101 aa).

Residues 1–19 show a composition bias toward basic residues; it reads MDKSKRPFRKSKRSFRKRL. The segment at 1-23 is disordered; the sequence is MDKSKRPFRKSKRSFRKRLPPIG.

This sequence belongs to the bacterial ribosomal protein bS18 family. Part of the 30S ribosomal subunit.

It is found in the plastid. It localises to the chloroplast. The polypeptide is Small ribosomal subunit protein bS18c (Chloranthus spicatus (Chulantree)).